A 208-amino-acid chain; its full sequence is NAD(P)H dehydrogenase (quinone) (208 aa).

Residues 4–192 enclose the Flavodoxin-like domain; it reads VLVLYYSSYG…DGARFQGRHV (189 aa). FMN is bound by residues 10 to 15 and 78 to 80; these read SSYGHV and TRF. Position 12 (Y12) interacts with NAD(+). Substrate is bound at residue W98. FMN contacts are provided by residues 113-119 and H134; that span reads STGSQHG. The segment at 161–183 is disordered; it reads YGASTLADDGDGGDRQPSANELD.

Belongs to the WrbA family. The cofactor is FMN.

The enzyme catalyses a quinone + NADH + H(+) = a quinol + NAD(+). The catalysed reaction is a quinone + NADPH + H(+) = a quinol + NADP(+). The chain is NAD(P)H dehydrogenase (quinone) from Paracoccus denitrificans (strain Pd 1222).